The following is a 238-amino-acid chain: Sugar fermentation stimulation protein homolog (238 aa).

Belongs to the SfsA family.

In Vibrio parahaemolyticus serotype O3:K6 (strain RIMD 2210633), this protein is Sugar fermentation stimulation protein homolog.